The following is a 245-amino-acid chain: Polyhedrin (245 aa).

Belongs to the polyhedrin family.

Its function is as follows. Major component of the virus occlusion bodies, which are large proteinaceous structures (polyhedra), that protect the virus from the outside environment for extended periods until they are ingested by insect larvae. This Bombyx mori nuclear polyhedrosis virus (BmNPV) protein is Polyhedrin (PH).